We begin with the raw amino-acid sequence, 138 residues long: Small ribosomal subunit protein uS11c (138 aa).

Belongs to the universal ribosomal protein uS11 family. As to quaternary structure, part of the 30S ribosomal subunit.

The protein resides in the plastid. This chain is Small ribosomal subunit protein uS11c, found in Cuscuta obtusiflora (Peruvian dodder).